We begin with the raw amino-acid sequence, 307 residues long: tRNA pseudouridine synthase B (307 aa).

The active-site Nucleophile is the aspartate 38.

It belongs to the pseudouridine synthase TruB family. Type 1 subfamily.

It carries out the reaction uridine(55) in tRNA = pseudouridine(55) in tRNA. Responsible for synthesis of pseudouridine from uracil-55 in the psi GC loop of transfer RNAs. In Bacillus anthracis, this protein is tRNA pseudouridine synthase B.